The sequence spans 610 residues: Aspartate--tRNA(Asp/Asn) ligase (610 aa).

An L-aspartate-binding site is contributed by glutamate 196. The aspartate stretch occupies residues 220–223 (QIFK). Position 242 (arginine 242) interacts with L-aspartate. ATP is bound by residues 242 to 244 (RDE) and glutamine 251. Histidine 465 contributes to the L-aspartate binding site. Glutamate 499 contacts ATP. Arginine 506 is a binding site for L-aspartate. An ATP-binding site is contributed by 551 to 554 (GMDR).

It belongs to the class-II aminoacyl-tRNA synthetase family. Type 1 subfamily. As to quaternary structure, homodimer.

The protein localises to the cytoplasm. The enzyme catalyses tRNA(Asx) + L-aspartate + ATP = L-aspartyl-tRNA(Asx) + AMP + diphosphate. Aspartyl-tRNA synthetase with relaxed tRNA specificity since it is able to aspartylate not only its cognate tRNA(Asp) but also tRNA(Asn). Reaction proceeds in two steps: L-aspartate is first activated by ATP to form Asp-AMP and then transferred to the acceptor end of tRNA(Asp/Asn). In Nitratidesulfovibrio vulgaris (strain ATCC 29579 / DSM 644 / CCUG 34227 / NCIMB 8303 / VKM B-1760 / Hildenborough) (Desulfovibrio vulgaris), this protein is Aspartate--tRNA(Asp/Asn) ligase.